A 191-amino-acid chain; its full sequence is Peptidyl-tRNA hydrolase (191 aa).

Y14 is a binding site for tRNA. The Proton acceptor role is filled by H19. Y64, N66, and N112 together coordinate tRNA.

It belongs to the PTH family. In terms of assembly, monomer.

Its subcellular location is the cytoplasm. The catalysed reaction is an N-acyl-L-alpha-aminoacyl-tRNA + H2O = an N-acyl-L-amino acid + a tRNA + H(+). Its function is as follows. Hydrolyzes ribosome-free peptidyl-tRNAs (with 1 or more amino acids incorporated), which drop off the ribosome during protein synthesis, or as a result of ribosome stalling. Catalyzes the release of premature peptidyl moieties from peptidyl-tRNA molecules trapped in stalled 50S ribosomal subunits, and thus maintains levels of free tRNAs and 50S ribosomes. This Clostridium beijerinckii (strain ATCC 51743 / NCIMB 8052) (Clostridium acetobutylicum) protein is Peptidyl-tRNA hydrolase.